Consider the following 115-residue polypeptide: U17-barytoxin-Tl1c (115 aa).

A signal peptide spans 1–20 (MKTIIVFLSLLVLATKFGDA). Positions 21 to 74 (KEGVNQKQKKEVTQNEFREEYLNEMAAMSLVQQLEAIERALFENEAGRNSRQKR) are excised as a propeptide. Intrachain disulfides connect Cys-75-Cys-89, Cys-82-Cys-94, and Cys-88-Cys-109.

This sequence belongs to the neurotoxin 14 (magi-1) family. 03 (ICK-30-40) subfamily. As to expression, expressed by the venom gland.

It localises to the secreted. In terms of biological role, ion channel inhibitor. The sequence is that of U17-barytoxin-Tl1c from Trittame loki (Brush-footed trapdoor spider).